The following is a 151-amino-acid chain: Nucleoside diphosphate kinase (151 aa).

ATP-binding residues include K11, F59, R87, T93, R104, and N114. The Pros-phosphohistidine intermediate role is filled by H117.

This sequence belongs to the NDK family. Homotetramer. It depends on Mg(2+) as a cofactor.

The protein resides in the cytoplasm. The catalysed reaction is a 2'-deoxyribonucleoside 5'-diphosphate + ATP = a 2'-deoxyribonucleoside 5'-triphosphate + ADP. It carries out the reaction a ribonucleoside 5'-diphosphate + ATP = a ribonucleoside 5'-triphosphate + ADP. Its function is as follows. Major role in the synthesis of nucleoside triphosphates other than ATP. The ATP gamma phosphate is transferred to the NDP beta phosphate via a ping-pong mechanism, using a phosphorylated active-site intermediate. The polypeptide is Nucleoside diphosphate kinase (Prochlorococcus marinus (strain NATL1A)).